The primary structure comprises 562 residues: Potassium-transporting ATPase potassium-binding subunit (562 aa).

12 helical membrane-spanning segments follow: residues 5 to 25 (GILA…PLGG), 65 to 85 (AYLR…YAVF), 135 to 155 (IGIT…AMAF), 181 to 201 (LLLP…VPET), 257 to 277 (ILEI…AGHF), 283 to 303 (LAIV…YIVY), 331 to 351 (FGLP…TGAV), 358 to 378 (LMPL…IFGG), 381 to 401 (VGLL…GLMV), 422 to 442 (AAML…MALP), 486 to 506 (ISIG…MLAI), and 528 to 548 (FAFG…TFFP).

It belongs to the KdpA family. As to quaternary structure, the system is composed of three essential subunits: KdpA, KdpB and KdpC.

Its subcellular location is the cell membrane. Functionally, part of the high-affinity ATP-driven potassium transport (or Kdp) system, which catalyzes the hydrolysis of ATP coupled with the electrogenic transport of potassium into the cytoplasm. This subunit binds the extracellular potassium ions and delivers the ions to the membrane domain of KdpB through an intramembrane tunnel. The sequence is that of Potassium-transporting ATPase potassium-binding subunit from Alicyclobacillus acidocaldarius subsp. acidocaldarius (strain ATCC 27009 / DSM 446 / BCRC 14685 / JCM 5260 / KCTC 1825 / NBRC 15652 / NCIMB 11725 / NRRL B-14509 / 104-IA) (Bacillus acidocaldarius).